Here is a 505-residue protein sequence, read N- to C-terminus: Phase 1 flagellin (505 aa).

Belongs to the bacterial flagellin family.

It is found in the secreted. It localises to the bacterial flagellum. Its function is as follows. Flagellin is the subunit protein which polymerizes to form the filaments of bacterial flagella. The protein is Phase 1 flagellin (fliC) of Salmonella naestved.